A 115-amino-acid chain; its full sequence is T cell receptor beta variable 7-7 (115 aa).

A signal peptide spans 1–21 (MGTSLLCWVVLGFLGTDHTGA). Residues 22–115 (GVSQSPRYKV…SAMYRCASSL (94 aa)) form the Ig-like domain. Residues C42 and C111 are joined by a disulfide bond.

As to quaternary structure, alpha-beta TR is a heterodimer composed of an alpha and beta chain; disulfide-linked. The alpha-beta TR is associated with the transmembrane signaling CD3 coreceptor proteins to form the TR-CD3 (TcR or TCR). The assembly of alpha-beta TR heterodimers with CD3 occurs in the endoplasmic reticulum where a single alpha-beta TR heterodimer associates with one CD3D-CD3E heterodimer, one CD3G-CD3E heterodimer and one CD247 homodimer forming a stable octameric structure. CD3D-CD3E and CD3G-CD3E heterodimers preferentially associate with TR alpha and TR beta chains, respectively. The association of the CD247 homodimer is the last step of TcR assembly in the endoplasmic reticulum and is required for transport to the cell surface.

The protein localises to the cell membrane. In terms of biological role, v region of the variable domain of T cell receptor (TR) beta chain that participates in the antigen recognition. Alpha-beta T cell receptors are antigen specific receptors which are essential to the immune response and are present on the cell surface of T lymphocytes. Recognize peptide-major histocompatibility (MH) (pMH) complexes that are displayed by antigen presenting cells (APC), a prerequisite for efficient T cell adaptive immunity against pathogens. Binding of alpha-beta TR to pMH complex initiates TR-CD3 clustering on the cell surface and intracellular activation of LCK that phosphorylates the ITAM motifs of CD3G, CD3D, CD3E and CD247 enabling the recruitment of ZAP70. In turn ZAP70 phosphorylates LAT, which recruits numerous signaling molecules to form the LAT signalosome. The LAT signalosome propagates signal branching to three major signaling pathways, the calcium, the mitogen-activated protein kinase (MAPK) kinase and the nuclear factor NF-kappa-B (NF-kB) pathways, leading to the mobilization of transcription factors that are critical for gene expression and essential for T cell growth and differentiation. The T cell repertoire is generated in the thymus, by V-(D)-J rearrangement. This repertoire is then shaped by intrathymic selection events to generate a peripheral T cell pool of self-MH restricted, non-autoaggressive T cells. Post-thymic interaction of alpha-beta TR with the pMH complexes shapes TR structural and functional avidity. The protein is T cell receptor beta variable 7-7 of Homo sapiens (Human).